We begin with the raw amino-acid sequence, 341 residues long: Very-long-chain 3-oxoacyl-CoA reductase (341 aa).

The helical transmembrane segment at 22–42 (AIYGFLLAGVAAFAAPIVSTI) threads the bilayer. The NADP(+) site is built by Leu67, Asp123, Asp131, Asn150, Tyr217, Lys221, Ile250, and Thr252. Tyr217 (proton donor) is an active-site residue. Lys221 (lowers pKa of active site Tyr) is an active-site residue.

This sequence belongs to the short-chain dehydrogenases/reductases (SDR) family.

It is found in the endoplasmic reticulum membrane. It carries out the reaction a very-long-chain (3R)-3-hydroxyacyl-CoA + NADP(+) = a very-long-chain 3-oxoacyl-CoA + NADPH + H(+). It functions in the pathway lipid metabolism; fatty acid biosynthesis. Component of the microsomal membrane bound fatty acid elongation system, which produces the 26-carbon very long-chain fatty acids (VLCFA) from palmitate. Catalyzes the reduction of the 3-ketoacyl-CoA intermediate that is formed in each cycle of fatty acid elongation. VLCFAs serve as precursors for ceramide and sphingolipids. This chain is Very-long-chain 3-oxoacyl-CoA reductase, found in Phaeosphaeria nodorum (strain SN15 / ATCC MYA-4574 / FGSC 10173) (Glume blotch fungus).